Consider the following 2892-residue polypeptide: MTTHQLLNKNVRTMPSWVMEANDRIGPKPPPTPPNGVAGGLPKAPALPPKAKSTPEPDYEIIEFSSQQYSNEPMKTTVIRTKTPDNKLKCTLCGSQNPWVTCAECAGQIFCASCDDMFHKHPKRKQHMRKAVEQGTPPIPPKAQAGGGAPPPVAPPRRSKRGLLTPFLGRKDQMLPPPSPTPSHKSLGGWRGSLGGGATPPVPPIATSSANQMNNRPLPDPPRSEGGGSSRSGTPKSVFDTIQRPPSVQLEKIKSKASATLDRMAILQQRYRQQKARQDLSANSEQHLSNEAGFEHWSNISPSPSHFRSGSMSSGLNSSHFDLSDDSQFHNSLLLQQRQAAGAQRRQMSTSVFNLNSNPRRPLSEAQNGGAWLANQRIQQAQSLAQLNCAGCQQSQQHPGWAQHPHQALPQHQHPDQWSQFGSQQQFNNSNLSLNVGPGYMSQQHHPHYPPPVFMTQRGMMPNVYPGAPGYPMMHPGVMGMPPSAASRAASRSRYAASPTPSRKSMSLRRKRNSYVDDELTDDEDSDQDDRRSLVSNRSGMTSASRSQHHQNHIQPRQRRLSSASQLIASDELDGDQVHHKMRNRRGSIAKSVQSEWLPERRENEGTLTRNKTATDSARTSRIYSDLESEGSGARALVQAKIQQKLQEADQHKSSKKAEPKRKPEMKDENTQAAAVVQKVVVPPAHEESASEYEEVVEEVTASESEAEAQTAPDPQEVPDEIGADDLGPPPSTPDHEWECEFCTFVNEPNIKICSICCKTPSKPPVQPNKAKKVEEKPQPPAEKSNNIKASSKTETKPVQKPTTKSQQPSQKSVAALSKTTHTNSTSSSKASPAVNSKTTSSIPIKTPSKSTLKTSSENESDNSLAKSLLHKESVENIWNTLDESIQAQAEQVLKKAQKVSTACGGTPPREIAAVEMGTSPPPQSISTQTYDALPFNTKQEEIIPVVPDRFTTPEPNKMERRPHYRSNSQLQQESERYRSANDLRYHDGFGLDPYSAGLVTKRPNFINELRMLQLQVSSPFDMPHETFGVKHEPARDPETEMHIILKELELYKFTVEELEAALKYCSPETHPIQWLRENWHKLVQTVQSLSTKYGQERGENTIGTVSQNEAREALRNSGGNVWQAVADCIQQRQQKYRKLAAKGNFLRDDIVNALTAHQGNVEQALVELNRTQLKPFLMRIWGSPNGVENESGVAIDTKSDIHDFLNTHALDCLQPPLAGQSPSPAQANPFDQPRTDESPVKSTYATPSPYQMEDSTLKNLEILIGNMEQNQAKQNQEVLRSIETMLDTFKGKPELEYETDPEIMRILTKSPISTMKPSGPAEDKSTDDVKNFVWQHIQEIVPNLVQQVEQELMEKPEEVAKIEAEQPKEPEPLLEPQPEPTPSVDPAVYIMEEVIKPNLREASIREEVQPSFIYATEIANFKLEFDRGTERWHEAEWESSDLTDAERIVYKCYMAPNEQPKEDVVDVAVESSVNSLPTAKAQEESAPEVPIEAQKIENTEVTQPETVNEELRQQEKLETPLVITSETISETVSQTANESDKQKSIENNLQIKQNVAEVQVQSDDQPSTSRDANRRAKRSQQSRKGRSREQSQKPTNRTKLPNNIDQKVNESKTAAKETEAVKDKDLSAAASNIQSDVTASDPKTSTPLKILSEGTNSNTLETMENVTSTDINDNVTIEVISNRSEEVPAIQDLGKTKDISEPTANPIEEITSIQNSTTISEQSEGPQEPEIPIEVSETTEALQVPREEASIEIVSPPNEEQTKSPTSQEVNIQDTSHIISLPITDVTPTPEIINIAPSTSSISKEQKQSPKRLSKIPVRTLSSSSLRSESRSSNRTPTANDEIEREETTSQGVPIGETVSSPKSEQLSDNQEVNLVSQETQSKKDTNIVEEPATQPLGLELEEHSPNATAVAVSPTDSDEVFEDAPEFSGSDGTRPHDETASDAELYSLDSDGQRAETKSPEDEVVILLDEESQMESSIAQSESNASLDSHSSESETSKVVLKEFVPSGDPAKQNLSELVEDTQRLIKQMRDEISMDEFESTDEDEYSDEYSDEYDEGEEEEWYDSEGEEEGDFDGEEGNTYNEHASYIEEASTGDEGTEIEDIMEEDEDLADDDEPLQSQIPLDIEPVISPALSVTPTNQETDTIAHTEVVSSTGTRLETELPNPAMESILPSQSVQEDIKVEAIPIQSAPPIADSETRPAEQPVELVLEIPSEVEPTPVEEPTALPITPAPPIVDSESRPVEPPVETVLEEPKKVTPSMKGKTANSGTASKGPSTSSSTKTNKSTVSKIPKPTNEPTNKSNSTPLNKKVPLRSKSFSAPMGISSVKRIQEVYLQKQSSSIATSRVPLKSSPVTKKSINDAISRFNSNQADGPSTSGAAAAAAAALLKPRSQPRIPKKKYHETCFSDDDYETSATEEEQEEPNLAEPQKAEQLKRKMSMPVFRAYPSVQEPVIEDPAILARKYVDQELVTNIAEAQIAATLVSMKFSEDVALWAARECSDLDQAIAMLQQECELCMNSYPMNQMVSMLKCLHKCCKQCAKSYFTVQITDRSINDCSCPFCKLPELSNEAQHEDEHLEYFSNLDIFLKSILDNDVHELFQRKLRDRSLLQDPNFKWCIQCSSGFFARPKQKRLICPDCGSVTCAQCRKPWERQHEGSSCEAYLEWKRENDPELQAQGVQEHLAQNGIDCPKCKFRYSLARGGCMHFTCTQCKFEFCYGCARPFMMGAKCTVSTYCAKLGLHAHHPRNCLFYLRDKIPLQLQFLLKEQNVKFDTEPMQIKDESSSSSKARAQARCPIPLQKETPQGLVDTVCNTEVPDKHAGMCRTHYVEYLAGKVAKAGIDPLPIFDLTDCVQELRRRGIALPERGPWDTDEIYKNMCSEVIKKHIPLKSA.

Disordered regions lie at residues 23 to 55 (DRIG…KSTP), 125 to 252 (KQHM…QLEK), 395 to 423 (SQQH…QFGS), 483 to 631 (PSAA…ESEG), 644 to 672 (QKLQ…ENTQ), 685 to 737 (AHEE…PDHE), 757 to 865 (CCKT…DNSL), and 949 to 975 (DRFT…QQES). Over residues 40-52 (GLPKAPALPPKAK) the composition is skewed to low complexity. The span at 189-198 (GWRGSLGGGA) shows a compositional bias: gly residues. A compositionally biased stretch (polar residues) spans 206–215 (ATSSANQMNN). Composition is skewed to low complexity over residues 402-412 (AQHPHQALPQH) and 483-503 (PSAA…TPSR). Acidic residues predominate over residues 516–528 (VDDELTDDEDSDQ). Over residues 535 to 546 (VSNRSGMTSASR) the composition is skewed to polar residues. Residues 547-560 (SQHHQNHIQPRQRR) are compositionally biased toward basic residues. The span at 606-623 (GTLTRNKTATDSARTSRI) shows a compositional bias: polar residues. Over residues 647–670 (QEADQHKSSKKAEPKRKPEMKDEN) the composition is skewed to basic and acidic residues. Polar residues predominate over residues 801–813 (KPTTKSQQPSQKS). 2 stretches are compositionally biased toward low complexity: residues 818–837 (SKTT…AVNS) and 846–856 (KTPSKSTLKTS). The 146-residue stretch at 1042–1187 (MHIILKELEL…LMRIWGSPNG (146 aa)) folds into the UBA-like 1 domain. Disordered stretches follow at residues 1214–1252 (LQPP…SPYQ), 1477–1520 (LPTA…KLET), 1557–1653 (AEVQ…KILS), 1717–2019 (STTI…NLSE), 2032–2082 (RDEI…EGNT), 2191–2316 (SAPP…PLRS), and 2411–2431 (DYET…EPQK). Residues 1241–1252 (VKSTYATPSPYQ) show a composition bias toward polar residues. Positions 1510–1519 (EELRQQEKLE) are enriched in basic and acidic residues. Residues 1560–1571 (QVQSDDQPSTSR) show a composition bias toward polar residues. A compositionally biased stretch (basic residues) spans 1576 to 1587 (RAKRSQQSRKGR). A compositionally biased stretch (polar residues) spans 1595 to 1607 (PTNRTKLPNNIDQ). Basic and acidic residues predominate over residues 1608-1627 (KVNESKTAAKETEAVKDKDL). Composition is skewed to polar residues over residues 1630–1653 (AASN…KILS), 1717–1726 (STTISEQSEG), and 1764–1779 (KSPT…TSHI). The span at 1822–1834 (LSSSSLRSESRSS) shows a compositional bias: low complexity. Residues 1859 to 1881 (TVSSPKSEQLSDNQEVNLVSQET) are compositionally biased toward polar residues. Acidic residues predominate over residues 1918–1927 (DSDEVFEDAP). The segment covering 1953–1963 (DGQRAETKSPE) has biased composition (basic and acidic residues). 2 stretches are compositionally biased toward acidic residues: residues 1964–1975 (DEVVILLDEESQ) and 2036–2079 (SMDE…DGEE). 2 stretches are compositionally biased toward low complexity: residues 2214-2230 (PSEV…ALPI) and 2269-2291 (SGTA…TVSK). Polar residues predominate over residues 2297–2308 (NEPTNKSNSTPL). A compositionally biased stretch (acidic residues) spans 2411–2425 (DYETSATEEEQEEPN). The 57-residue stretch at 2457 to 2513 (DPAILARKYVDQELVTNIAEAQIAATLVSMKFSEDVALWAARECSDLDQAIAMLQQE) folds into the UBA-like 2 domain. The tract at residues 2510 to 2748 (LQQECELCMN…LGLHAHHPRN (239 aa)) is TRIAD supradomain. Zn(2+) contacts are provided by Cys-2514, Cys-2517, Cys-2537, Cys-2540, Cys-2618, Cys-2621, Cys-2636, Cys-2639, Cys-2644, Cys-2647, His-2655, Cys-2660, Cys-2690, and Cys-2693. The RING-type 1 zinc finger occupies 2514–2564 (CELCMNSYPMNQMVSMLKCLHKCCKQCAKSYFTVQITDRSINDCSCPFCKL). Positions 2514-2892 (CELCMNSYPM…IKKHIPLKSA (379 aa)) are necessary for linear polyubiquitination and sufficent for inducing DptA in the intestine. The IBR-type zinc-finger motif lies at 2601–2660 (QRKLRDRSLLQDPNFKWCIQCSSGFFARPKQKRLICPDCGSVTCAQCRKPWERQHEGSSC). The RING-type 2; atypical zinc finger occupies 2690–2720 (CPKCKFRYSLARGGCMHFTCTQCKFEFCYGC). Cys-2704 is an active-site residue. Zn(2+) is bound by residues Cys-2709 and Cys-2712.

Belongs to the RBR family.

It catalyses the reaction [E2 ubiquitin-conjugating enzyme]-S-ubiquitinyl-L-cysteine + [acceptor protein]-L-lysine = [E2 ubiquitin-conjugating enzyme]-L-cysteine + [acceptor protein]-N(6)-ubiquitinyl-L-lysine.. E3 ubiquitin-protein ligase which conjugates linear 'Met-1'- and 'Lys-63'-linked polyubiquitin chains to substrates and plays a crucial role in the NF-kappa-B intestinal inflammatory response to oral infection and in the heat stress response. Preferentially interacts with 'Lys-63'-linked, and to a lesser extent 'Lys-48'-linked, polyubiquitin chains. Upon oral infection with a Gram-negative bacterium E.carotovora subsp. carotovora 15, functions with the E2 ubiquitin-conjugating enzyme Ubc10 to mediate the conjugation of 'Lys-63'- and linear 'Met-1'-linked polyubiquitin chains to the substrate key which is essential for activation of the NF-kappa-B signaling cascade in the adult intestinal epithelium. It is not required for systemic immune response to septic infection with either E.carotovora subsp. carotovora 15 or Gram-positive M.luteus bacteria. Function in controlling linear ubiquitination is also essential for regulating the heat stress response in adults. This function may require the E2 ubiquitin-conjugating enzymes Ubc10 or eff. The sequence is that of E3 ubiquitin-protein ligase lubel from Drosophila melanogaster (Fruit fly).